Reading from the N-terminus, the 116-residue chain is Somatostatin (116 aa).

The N-terminal stretch at 1–24 (MLSCRLQCALAALSIVLALGGVTG) is a signal peptide. Residues 25 to 88 (APSDPRLRQF…QDEMRLELQR (64 aa)) constitute a propeptide that is removed on maturation. An Alanine amide modification is found at alanine 43. A disulfide bridge connects residues cysteine 105 and cysteine 116.

Belongs to the somatostatin family. Post-translationally, C-terminal amidation of the neuronostatin peptide is required for its biological activity, including for the regulation of mean arterial pressure.

It localises to the secreted. In terms of biological role, inhibits the secretion of pituitary hormones, including that of growth hormone/somatotropin (GH1), PRL, ACTH, luteinizing hormone (LH) and TSH. Also impairs ghrelin- and GnRH-stimulated secretion of GH1 and LH; the inhibition of ghrelin-stimulated secretion of GH1 can be further increased by neuronostatin. May enhance low-glucose-induced glucagon release by pancreatic alpha cells. This effect may be mediated by binding to GPR107 and PKA activation. May regulate cardiac contractile function. May compromise cardiomyocyte viability. In the central nervous system, may impair memory retention and may affect hippocampal excitability. May also have anxiolytic and anorexigenic effects. May play a role in arterial pressure regulation. May inhibit basal, but not ghrelin- or GnRH-stimulated secretion of GH1 or LH, but does not affect the release of other pituitary hormones, including PRL, ACTH, FSH or TSH. Potentiates inhibitory action of somatostatin on ghrelin-stimulated secretion of GH1, but not that on GnRH-stimulated secretion of LH. The polypeptide is Somatostatin (SST) (Bos taurus (Bovine)).